Reading from the N-terminus, the 669-residue chain is Epithelial sodium channel subunit alpha (669 aa).

The tract at residues 1 to 43 (MEGNKLEEQDSSPPQSTPGLMKGNKREEQGLGPEPAAPQQPTA) is disordered. Topologically, residues 1–85 (MEGNKLEEQD…CSQHNRMKTA (85 aa)) are cytoplasmic. A compositionally biased stretch (low complexity) spans 33 to 42 (PEPAAPQQPT). The helical transmembrane segment at 86–106 (FWAVLWLCTFGMMYWQFGLLF) threads the bilayer. The Extracellular segment spans residues 107-562 (GEYFSYPVSL…SQWSLWFGSS (456 aa)). Disulfide bonds link Cys-133/Cys-305, Cys-229/Cys-236, Cys-282/Cys-289, Cys-394/Cys-479, Cys-416/Cys-456, Cys-416/Cys-475, Cys-420/Cys-471, Cys-429/Cys-456, Cys-429/Cys-479, and Cys-431/Cys-445. The tract at residues 175–243 (RSRRDLRGTL…SDCFYQTYSS (69 aa)) is gating release of inhibition by proteolysis (GRIP); protease-sensitive region that is responsible for the proteolytic activation of the channel. Residues 563–583 (VLSVVEMAELVFDLLVIMFLM) form a helical membrane-spanning segment. The Cytoplasmic segment spans residues 584-669 (LLRRFRSRYW…SSSTCPLGGP (86 aa)). A disordered region spans residues 620-669 (HPMSLSLSQPGPAPSPALTAPPPAYATLGPRPSPGGSAGASSSTCPLGGP). A compositionally biased stretch (pro residues) spans 630–643 (GPAPSPALTAPPPA). Residues 640-644 (PPPAY) carry the PY motif; recruits WW domain-containing proteins and is thereby required for ubiquitination and inhibition of the channel by NEDD4 and NEDD4L motif.

It belongs to the amiloride-sensitive sodium channel (TC 1.A.6) family. SCNN1A subfamily. As to quaternary structure, heterotrimer; containing an alpha/SCNN1A, a beta/SCNN1B and a gamma/SCNN1G subunit. Interacts with WWP1 (via WW domains). Interacts with WWP2 (via WW domains); inhibits the channel. Interacts with BPIFA1; the interaction is indirect via SCNN1B and inhibits the proteolytic processing of SCNN1A and SCNN1G and the activation of ENaC. Interacts with the full-length immature form of PCSK9 (pro-PCSK9); inhibits ENaC by promoting its proteasomal degradation. Ubiquitinated. Can be ubiquitinated at multiple sites and undergo monoubiquitination and polyubiquitination. Ubiquitination by NEDD4 or NEDD4L inhibits the ENaC channel through endocytosis, intracellular retention and degradation of its individual subunits. Post-translationally, ENaC is activated through the proteolytic maturation of its subunits. Furin cleaves the SCNN1A subunit, which results in a stepwise increase in the open probability of the channel due to the release of an inhibitory tract. BPIFA1, which is recruited by the SCNN1B subunit, prevents the proteolytic activation of ENaC. In terms of processing, N-glycosylated. In terms of tissue distribution, expressed in the female reproductive tract, from the fimbrial end of the fallopian tube to the endometrium (at protein level). Expressed in kidney (at protein level). In the respiratory tract, expressed in the bronchial epithelium (at protein level). Highly expressed in lung. Detected at intermediate levels in pancreas and liver, and at low levels in heart and placenta. in skin, expressed in keratinocytes, melanocytes and Merkel cells of the epidermal sub-layers, stratum basale, stratum spinosum and stratum granulosum (at protein level). Expressed in the outer root sheath of the hair follicles (at protein level). Detected in both peripheral and central cells of the sebaceous gland (at protein level). Expressed by eccrine sweat glands (at protein level). In skin, also expressed by arrector pili muscle cells and intradermal adipocytes. Isoform 1 and isoform 2 predominate in all tissues. Detected in lung and heart.

The protein resides in the apical cell membrane. It is found in the cell projection. The protein localises to the cilium. It localises to the cytoplasmic granule. Its subcellular location is the cytoplasm. The protein resides in the cytoplasmic vesicle. It is found in the secretory vesicle. The protein localises to the acrosome. It localises to the flagellum. It carries out the reaction Na(+)(in) = Na(+)(out). Its activity is regulated as follows. Originally identified and characterized by its inhibition by the diuretic drug amiloride. Inhibited by phenamil. In terms of biological role, this is one of the three pore-forming subunits of the heterotrimeric epithelial sodium channel (ENaC), a critical regulator of sodium balance and fluid homeostasis. ENaC operates in epithelial tissues, where it mediates the electrodiffusion of sodium ions from extracellular fluid through the apical membrane of cells, with water following osmotically. It plays a key role in maintaining sodium homeostasis through electrogenic sodium reabsorption in the kidneys. Additionally, ENaC is essential for airway surface liquid homeostasis, which is crucial for proper mucus clearance. Its function is as follows. Not functional. The polypeptide is Epithelial sodium channel subunit alpha (Homo sapiens (Human)).